The chain runs to 417 residues: Serine hydroxymethyltransferase (417 aa).

Residues L116 and 120 to 122 (GHL) each bind (6S)-5,6,7,8-tetrahydrofolate. Residue K225 is modified to N6-(pyridoxal phosphate)lysine.

The protein belongs to the SHMT family. Homodimer. It depends on pyridoxal 5'-phosphate as a cofactor.

It localises to the cytoplasm. It catalyses the reaction (6R)-5,10-methylene-5,6,7,8-tetrahydrofolate + glycine + H2O = (6S)-5,6,7,8-tetrahydrofolate + L-serine. It functions in the pathway one-carbon metabolism; tetrahydrofolate interconversion. The protein operates within amino-acid biosynthesis; glycine biosynthesis; glycine from L-serine: step 1/1. Its function is as follows. Catalyzes the reversible interconversion of serine and glycine with tetrahydrofolate (THF) serving as the one-carbon carrier. This reaction serves as the major source of one-carbon groups required for the biosynthesis of purines, thymidylate, methionine, and other important biomolecules. Also exhibits THF-independent aldolase activity toward beta-hydroxyamino acids, producing glycine and aldehydes, via a retro-aldol mechanism. The chain is Serine hydroxymethyltransferase from Hydrogenobaculum sp. (strain Y04AAS1).